The primary structure comprises 125 residues: Small ribosomal subunit protein uS13 (125 aa).

Positions arginine 92 to lysine 125 are disordered.

The protein belongs to the universal ribosomal protein uS13 family. Part of the 30S ribosomal subunit. Forms a loose heterodimer with protein S19. Forms two bridges to the 50S subunit in the 70S ribosome.

Located at the top of the head of the 30S subunit, it contacts several helices of the 16S rRNA. In the 70S ribosome it contacts the 23S rRNA (bridge B1a) and protein L5 of the 50S subunit (bridge B1b), connecting the 2 subunits; these bridges are implicated in subunit movement. Contacts the tRNAs in the A and P-sites. This Chlorobaculum parvum (strain DSM 263 / NCIMB 8327) (Chlorobium vibrioforme subsp. thiosulfatophilum) protein is Small ribosomal subunit protein uS13.